A 509-amino-acid chain; its full sequence is Coiled-coil domain-containing protein 181 (509 aa).

Basic and acidic residues predominate over residues 58–82 (VIEHTKQHSDPDKSLQDEVSPRKND). Disordered stretches follow at residues 58-120 (VIEH…EEED), 241-332 (PINN…VTST), and 345-367 (QLEQ…EEKE). 2 stretches are compositionally biased toward polar residues: residues 243–266 (NNAN…SVSG) and 300–332 (TCPS…VTST). Positions 335-375 (LSPRQKELQKQLEQKREKLKREEERRKIEEEKEKKRENDIV) form a coiled coil.

This sequence belongs to the CCDC181 family. In terms of assembly, homodimer. Interacts with HOOK1. Interacts with HOOK2. Interacts with HOOK3.

The protein localises to the cytoplasm. It localises to the cytoskeleton. The protein resides in the cell projection. Its subcellular location is the cilium. It is found in the flagellum. Its function is as follows. Microtubule-binding protein that localizes to the microtubular manchette of elongating spermatids. This is Coiled-coil domain-containing protein 181 from Pongo abelii (Sumatran orangutan).